The chain runs to 380 residues: Succinyl-diaminopimelate desuccinylase (380 aa).

His69 is a Zn(2+) binding site. The active site involves Asp71. Residue Asp102 participates in Zn(2+) binding. Residue Glu136 is the Proton acceptor of the active site. 3 residues coordinate Zn(2+): Glu137, Glu165, and His351.

The protein belongs to the peptidase M20A family. DapE subfamily. In terms of assembly, homodimer. Zn(2+) serves as cofactor. Co(2+) is required as a cofactor.

It carries out the reaction N-succinyl-(2S,6S)-2,6-diaminopimelate + H2O = (2S,6S)-2,6-diaminopimelate + succinate. The protein operates within amino-acid biosynthesis; L-lysine biosynthesis via DAP pathway; LL-2,6-diaminopimelate from (S)-tetrahydrodipicolinate (succinylase route): step 3/3. Functionally, catalyzes the hydrolysis of N-succinyl-L,L-diaminopimelic acid (SDAP), forming succinate and LL-2,6-diaminopimelate (DAP), an intermediate involved in the bacterial biosynthesis of lysine and meso-diaminopimelic acid, an essential component of bacterial cell walls. The chain is Succinyl-diaminopimelate desuccinylase from Bordetella petrii (strain ATCC BAA-461 / DSM 12804 / CCUG 43448).